The sequence spans 67 residues: Probable Sec-independent protein translocase protein TatE (67 aa).

A helical transmembrane segment spans residues 1 to 21; it reads MEGISIAKLLIIGALIVLLFG. The segment at 44-67 is disordered; sequence KDEDTSAARTTAEETPAERVSHKD.

The protein belongs to the TatA/E family. TatE subfamily.

It localises to the cell inner membrane. Its function is as follows. Part of the twin-arginine translocation (Tat) system that transports large folded proteins containing a characteristic twin-arginine motif in their signal peptide across membranes. TatE shares overlapping functions with TatA. The chain is Probable Sec-independent protein translocase protein TatE from Pantoea ananatis (strain LMG 20103).